We begin with the raw amino-acid sequence, 651 residues long: Cytoplasmic tyrosine-protein kinase BMX (651 aa).

Positions 4-111 (KSILEELLLK…WLKALQKEIR (108 aa)) constitute a PH domain. The segment at 113–149 (NPHLLIKYHSGFFVDGKFLCCQQSCKAAPGCTLWEAY) adopts a Btk-type zinc-finger fold. 4 residues coordinate Zn(2+): H121, C132, C133, and C143. In terms of domain architecture, SH2 spans 272–368 (WFAGNISRSQ…GMITRLRHPV (97 aa)). One can recognise a Protein kinase domain in the interval 393 to 646 (ITLLKELGNG…QLLSAIEPLR (254 aa)). ATP-binding positions include 399–407 (LGNGQFGVV) and K421. D512 serves as the catalytic Proton acceptor. Residue Y542 is modified to Phosphotyrosine; by SRC and autocatalysis.

This sequence belongs to the protein kinase superfamily. Tyr protein kinase family. TEC subfamily. Interacts with BCAR1, CAV1, MYD88, PTK2/FAK1, RUFY1, RUFY2, STAT3, TIRAP and TNFRSF1B. It depends on Zn(2+) as a cofactor. In terms of processing, phosphorylated in response to protein I/II and to LPS. Phosphorylation at Tyr-542 by SRC and by autocatalysis leads to activation and is required for STAT3 phosphorylation by BMX. In terms of tissue distribution, specifically expressed in the endocardium of the developing heart as well as in the endocardium of the left ventricle and in the endothelium of large arteries in adult mice.

The protein resides in the cytoplasm. The enzyme catalyses L-tyrosyl-[protein] + ATP = O-phospho-L-tyrosyl-[protein] + ADP + H(+). With respect to regulation, TEK and vascular endothelial growth factor receptor 1 (FLT1) stimulate BMX tyrosine kinase activity. Activated by integrins through the mediation of PTK2/FAK1. Activated by TNF through the mediation of TNFRSF1B. Functionally, non-receptor tyrosine kinase that plays central but diverse modulatory roles in various signaling processes involved in the regulation of actin reorganization, cell migration, cell proliferation and survival, cell adhesion, and apoptosis. Participates in signal transduction stimulated by growth factor receptors, cytokine receptors, G-protein coupled receptors, antigen receptors and integrins. Induces tyrosine phosphorylation of BCAR1 in response to integrin regulation. Activation of BMX by integrins is mediated by PTK2/FAK1, a key mediator of integrin signaling events leading to the regulation of actin cytoskeleton and cell motility. Plays a critical role in TNF-induced angiogenesis, and implicated in the signaling of TEK and FLT1 receptors, 2 important receptor families essential for angiogenesis. Required for the phosphorylation and activation of STAT3, a transcription factor involved in cell differentiation. Also involved in interleukin-6 (IL6) induced differentiation. Also plays a role in programming adaptive cytoprotection against extracellular stress in different cell systems, salivary epithelial cells, brain endothelial cells, and dermal fibroblasts. May be involved in regulation of endocytosis through its interaction with an endosomal protein RUFY1. May also play a role in the growth and differentiation of hematopoietic cells; as well as in signal transduction in endocardial and arterial endothelial cells. In Mus musculus (Mouse), this protein is Cytoplasmic tyrosine-protein kinase BMX (Bmx).